Here is a 210-residue protein sequence, read N- to C-terminus: dITP/XTP pyrophosphatase (210 aa).

16–21 (SNNKGK) contributes to the substrate binding site. The active-site Proton acceptor is Asp-79. Residue Asp-79 coordinates Mg(2+). Residues Ser-80, 166–169 (FGYD), Lys-189, and 194–195 (HR) each bind substrate.

It belongs to the HAM1 NTPase family. Homodimer. It depends on Mg(2+) as a cofactor.

The catalysed reaction is XTP + H2O = XMP + diphosphate + H(+). It carries out the reaction dITP + H2O = dIMP + diphosphate + H(+). The enzyme catalyses ITP + H2O = IMP + diphosphate + H(+). Pyrophosphatase that catalyzes the hydrolysis of nucleoside triphosphates to their monophosphate derivatives, with a high preference for the non-canonical purine nucleotides XTP (xanthosine triphosphate), dITP (deoxyinosine triphosphate) and ITP. Seems to function as a house-cleaning enzyme that removes non-canonical purine nucleotides from the nucleotide pool, thus preventing their incorporation into DNA/RNA and avoiding chromosomal lesions. The polypeptide is dITP/XTP pyrophosphatase (Acinetobacter baylyi (strain ATCC 33305 / BD413 / ADP1)).